Reading from the N-terminus, the 2813-residue chain is A-kinase anchor protein 13 (2813 aa).

2 disordered regions span residues 304–400 and 415–439; these read AQDP…QDSC and LSSC…QESL. Positions 427–439 are enriched in polar residues; the sequence is TKSSGMPTDQESL. An important for interaction with PRKAR2A region spans residues 494 to 516; the sequence is WKNVLQGGESTKERFENSNIGTA. Disordered stretches follow at residues 539-585, 632-653, and 690-726; these read AASS…VDQN, HQNS…SPIC, and SEST…RDTQ. A compositionally biased stretch (basic and acidic residues) spans 561-577; sequence STEKTAETETSRSREES. The segment covering 690 to 702 has biased composition (polar residues); that stretch reads SESTTARQPSSQD. Ser790 carries the phosphoserine modification. Disordered stretches follow at residues 805-856 and 939-965; these read VPSQ…AAEL and ENAL…QFHE. Thr815 bears the Phosphothreonine mark. Residues 835–844 are compositionally biased toward basic and acidic residues; sequence PDTRPLEDRA. Composition is skewed to polar residues over residues 847 to 856 and 939 to 948; these read LSTSSTAAEL and ENALSSGTLQ. Thr953 carries the post-translational modification Phosphothreonine. The residue at position 983 (Ser983) is a Phosphoserine. Disordered stretches follow at residues 1431 to 1455 and 1467 to 1542; these read GVLK…DSII and DITG…DSIT. Low complexity predominate over residues 1467 to 1478; it reads DITGSSSSTDDT. Residues 1488 to 1497 are compositionally biased toward polar residues; the sequence is GSDVSLSQIL. Phosphoserine occurs at positions 1489, 1507, 1540, 1565, and 1602. Acidic residues predominate over residues 1525–1540; sequence SEPADPGDVEEEEMDS. Residues 1585-1715 are important for interaction with MAP2K3; that stretch reads RVLGDVVRRP…HSTFHNTSAN (131 aa). The disordered stretch occupies residues 1601 to 1638; it reads FSLEGLTGGAGVGNKPSSSLEVSSANAEELRHPFSGEE. Residues 1615–1626 are compositionally biased toward polar residues; that stretch reads KPSSSLEVSSAN. Basic and acidic residues predominate over residues 1628 to 1638; the sequence is EELRHPFSGEE. 3 positions are modified to phosphoserine: Ser1642, Ser1645, and Ser1647. Lys1670 is subject to N6-methyllysine. The interval 1755-1793 is disordered; the sequence is KMSSSKKSKEKEKEKDKIKEKEKDSKDKEKDKKTVNGHT. Residues 1758–1790 adopt a coiled-coil conformation; it reads SSKKSKEKEKEKDKIKEKEKDSKDKEKDKKTVN. Over residues 1761-1788 the composition is skewed to basic and acidic residues; the sequence is KSKEKEKEKDKIKEKEKDSKDKEKDKKT. The Phorbol-ester/DAG-type zinc finger occupies 1791 to 1838; the sequence is GHTFSSIPVVGPISCSQCMKPFTNKDAYTCANCSAFVHKGCRESLASC. Residues Ser1876, Ser1895, and Ser1929 each carry the phosphoserine modification. Positions 1919–2813 are interaction with ESR1; the sequence is MSNTWKFLSH…VSAEGEEIFC (895 aa). At Thr1930 the chain carries Phosphothreonine. Phosphoserine is present on residues Ser1932 and Ser1945. The region spanning 1994–2191 is the DH domain; it reads KRQEVIYELM…KDVIGAVDSK (198 aa). The region spanning 2231-2333 is the PH domain; the sequence is KLVRDGSVFL…WIQIIQDTIN (103 aa). Phosphoserine is present on residues Ser2345 and Ser2398. The stretch at 2345–2381 forms a coiled coil; it reads SENEEEKKMLDTRARELKEQLHQKDQKILLLLEEKEM. The disordered stretch occupies residues 2466-2502; the sequence is ETFGGFDSHQMNASKGGEKEEGDDGQDLRRTESDSGL. Thr2467 carries the post-translational modification Phosphothreonine. A Phosphoserine modification is found at Ser2473. The span at 2491 to 2502 shows a compositional bias: basic and acidic residues; it reads QDLRRTESDSGL. Phosphoserine occurs at positions 2563 and 2566. A coiled-coil region spans residues 2568 to 2683; that stretch reads LIEQEKQRSL…RLSQRQTERD (116 aa). Residues 2665 to 2684 show a composition bias toward basic and acidic residues; sequence QEQLRREAERLSQRQTERDL. A disordered region spans residues 2665-2813; that stretch reads QEQLRREAER…VSAEGEEIFC (149 aa). A phosphoserine mark is found at Ser2703, Ser2709, and Ser2728. Positions 2720-2735 are enriched in polar residues; it reads SLDSELSVSPKRNSIS. Low complexity predominate over residues 2760 to 2771; sequence QSQAPASTSAST.

As to quaternary structure, interacts with the cAMP-dependent protein kinase (PKA) holoenzyme and with the regulatory subunit PRKAR2A. Interacts with RHOA. Also interacts with RHOB and RHOC. Identified in a ternary complex with RHOA and PRKAR2A. Identified in a complex with NR3C1 and RHOA. Interacts with BRAF and KSR1. Identified in a complex with BRAF and KSR1. Component of a signaling complex containing at least AKAP13, PKN1, MAPK14, ZAK and MAP2K3. Within this complex, AKAP13 interacts directly with PKN1, which in turn recruits MAPK14, MAP2K3 and ZAK. Interacts (phosphorylated form) with YWHAB and YWHAZ. Interaction with YWHAB inhibits activation of RHOA, interferes with PKN1 binding and activation of MAP kinases. Interacts with GNA12. Interacts with IKBKB. Interacts with ESR1, THRA, PPARA and NME2. Interacts (via the C-terminal domain after the PH domain) with MEF2C and RXRB. Interacts (via the C-terminal domain after the PH domain) with PRKD1. In terms of tissue distribution, detected in mammary gland. Detected in heart (at protein level). Expressed as a 5.3 kb transcript in hematopoietic cells, skeletal muscle, lung, heart, estrogen-responsive reproductive tissues, including breast ductal epithelium. Also found in testis and breast cancer cell lines. Predominantly expressed as a 10 kb transcript in the heart and at lower levels in the lung, placenta, kidney, pancreas, skeletal muscle and liver. Transcripts of between 6-9 kb are also expressed in myeloid and lymphoid lineages, a variety of epithelial tissues, and in skeletal muscle.

It is found in the cytoplasm. It localises to the cytosol. Its subcellular location is the cell cortex. The protein localises to the nucleus. The protein resides in the membrane. Functionally, scaffold protein that plays an important role in assembling signaling complexes downstream of several types of G protein-coupled receptors. Activates RHOA in response to signaling via G protein-coupled receptors via its function as Rho guanine nucleotide exchange factor. May also activate other Rho family members. Part of a kinase signaling complex that links ADRA1A and ADRA1B adrenergic receptor signaling to the activation of downstream p38 MAP kinases, such as MAPK11 and MAPK14. Part of a signaling complex that links ADRA1B signaling to the activation of RHOA and IKBKB/IKKB, leading to increased NF-kappa-B transcriptional activity. Part of a RHOA-dependent signaling cascade that mediates responses to lysophosphatidic acid (LPA), a signaling molecule that activates G-protein coupled receptors and potentiates transcriptional activation of the glucocorticoid receptor NR3C1. Part of a signaling cascade that stimulates MEF2C-dependent gene expression in response to lysophosphatidic acid (LPA). Part of a signaling pathway that activates MAPK11 and/or MAPK14 and leads to increased transcription activation of the estrogen receptors ESR1 and ESR2. Part of a signaling cascade that links cAMP and EGFR signaling to BRAF signaling and to PKA-mediated phosphorylation of KSR1, leading to the activation of downstream MAP kinases, such as MAPK1 or MAPK3. Functions as a scaffold protein that anchors cAMP-dependent protein kinase (PKA) and PRKD1. This promotes activation of PRKD1, leading to increased phosphorylation of HDAC5 and ultimately cardiomyocyte hypertrophy. Has no guanine nucleotide exchange activity on CDC42, Ras or Rac. Required for normal embryonic heart development, and in particular for normal sarcomere formation in the developing cardiomyocytes. Plays a role in cardiomyocyte growth and cardiac hypertrophy in response to activation of the beta-adrenergic receptor by phenylephrine or isoproterenol. Required for normal adaptive cardiac hypertrophy in response to pressure overload. Plays a role in osteogenesis. The protein is A-kinase anchor protein 13 (AKAP13) of Homo sapiens (Human).